Consider the following 176-residue polypeptide: Transcriptional repressor NrdR (176 aa).

A zinc finger lies at 3 to 34 (CPFCQHTDSRVLESRSAEAGQSVRRRRECLQC). In terms of domain architecture, ATP-cone spans 49–139 (ITVIKRNQDR…VYRQFRGIRD (91 aa)). The disordered stretch occupies residues 151 to 176 (GDGPLPSVLDEPYEDTAQPTIMISPQ). Polar residues predominate over residues 167 to 176 (AQPTIMISPQ).

This sequence belongs to the NrdR family. It depends on Zn(2+) as a cofactor.

Functionally, negatively regulates transcription of bacterial ribonucleotide reductase nrd genes and operons by binding to NrdR-boxes. This chain is Transcriptional repressor NrdR, found in Acaryochloris marina (strain MBIC 11017).